A 103-amino-acid chain; its full sequence is UPF0473 protein LCA_0390 (103 aa).

This sequence belongs to the UPF0473 family.

This Latilactobacillus sakei subsp. sakei (strain 23K) (Lactobacillus sakei subsp. sakei) protein is UPF0473 protein LCA_0390.